The following is a 617-amino-acid chain: Probable potassium transport system protein Kup 3 (617 aa).

11 helical membrane-spanning segments follow: residues 42–62 (VASL…ALLI), 95–115 (LVVG…TPAI), 129–149 (PSLA…LFMM), 160–180 (IFGP…IHGI), 206–226 (VSFA…AMYA), 240–260 (WFAI…ALLI), 282–302 (LVAF…SGVF), 330–350 (IYVP…VLSF), 360–380 (YGIA…LVAI), 386–406 (PWLV…FFSA), and 411–431 (LFEG…MMLT).

This sequence belongs to the HAK/KUP transporter (TC 2.A.72) family.

It is found in the cell inner membrane. It carries out the reaction K(+)(in) + H(+)(in) = K(+)(out) + H(+)(out). Functionally, transport of potassium into the cell. Likely operates as a K(+):H(+) symporter. The chain is Probable potassium transport system protein Kup 3 from Bradyrhizobium diazoefficiens (strain JCM 10833 / BCRC 13528 / IAM 13628 / NBRC 14792 / USDA 110).